A 713-amino-acid polypeptide reads, in one-letter code: Phosphoribosylformylglycinamidine synthase subunit PurL (713 aa).

Residue His32 is part of the active site. Position 35 (Tyr35) interacts with ATP. Mg(2+) is bound at residue Glu76. Residues 77 to 80 (SHNH) and Arg99 each bind substrate. The Proton acceptor role is filled by His78. Asp100 provides a ligand contact to Mg(2+). Gln224 is a substrate binding site. Asp252 serves as a coordination point for Mg(2+). A substrate-binding site is contributed by 296–298 (ESQ). 2 residues coordinate ATP: Asp471 and Gly508. Asn509 is a Mg(2+) binding site. Ser511 lines the substrate pocket.

This sequence belongs to the FGAMS family. In terms of assembly, monomer. Part of the FGAM synthase complex composed of 1 PurL, 1 PurQ and 2 PurS subunits.

The protein resides in the cytoplasm. It catalyses the reaction N(2)-formyl-N(1)-(5-phospho-beta-D-ribosyl)glycinamide + L-glutamine + ATP + H2O = 2-formamido-N(1)-(5-O-phospho-beta-D-ribosyl)acetamidine + L-glutamate + ADP + phosphate + H(+). It functions in the pathway purine metabolism; IMP biosynthesis via de novo pathway; 5-amino-1-(5-phospho-D-ribosyl)imidazole from N(2)-formyl-N(1)-(5-phospho-D-ribosyl)glycinamide: step 1/2. Functionally, part of the phosphoribosylformylglycinamidine synthase complex involved in the purines biosynthetic pathway. Catalyzes the ATP-dependent conversion of formylglycinamide ribonucleotide (FGAR) and glutamine to yield formylglycinamidine ribonucleotide (FGAM) and glutamate. The FGAM synthase complex is composed of three subunits. PurQ produces an ammonia molecule by converting glutamine to glutamate. PurL transfers the ammonia molecule to FGAR to form FGAM in an ATP-dependent manner. PurS interacts with PurQ and PurL and is thought to assist in the transfer of the ammonia molecule from PurQ to PurL. The polypeptide is Phosphoribosylformylglycinamidine synthase subunit PurL (Thermococcus sibiricus (strain DSM 12597 / MM 739)).